A 280-amino-acid chain; its full sequence is MTFRAASDQIEVPAGVGLTAVGMAWVRARESARRDRLFDDPYAEAFVEAAGGPAAAGPAGAFARFIDVVDSHGVQRTRFFDDYLTRAADAGQRQFVLLAAGLDTRAHRLSWPAGTRLFEVDLPEMLTFKQAVLDTRHATARAERITVPADLAGDWSSALTRAGLRPRERTTWLVEGLLPYLDAEAAAHLLTTVGELSVPGSLLGFEYQADTWLLDELRATPELAEFATLLKGGLGESPLDWLPRHGWQVLQARLRSELAAEAGRPAPGPLADGFLVATRR.

Residues aspartate 121 and 150 to 151 each bind S-adenosyl-L-methionine; that span reads DL.

Belongs to the UPF0677 family.

Functionally, exhibits S-adenosyl-L-methionine-dependent methyltransferase activity. This chain is Putative S-adenosyl-L-methionine-dependent methyltransferase FRAAL3836, found in Frankia alni (strain DSM 45986 / CECT 9034 / ACN14a).